Here is a 435-residue protein sequence, read N- to C-terminus: Serine--tRNA ligase (435 aa).

237 to 239 contributes to the L-serine binding site; that stretch reads TAE. 268 to 270 contacts ATP; sequence RSE. E291 lines the L-serine pocket. Position 355 to 358 (355 to 358) interacts with ATP; it reads EISS. S390 is an L-serine binding site.

It belongs to the class-II aminoacyl-tRNA synthetase family. Type-1 seryl-tRNA synthetase subfamily. Homodimer. The tRNA molecule binds across the dimer.

The protein resides in the cytoplasm. The enzyme catalyses tRNA(Ser) + L-serine + ATP = L-seryl-tRNA(Ser) + AMP + diphosphate + H(+). It catalyses the reaction tRNA(Sec) + L-serine + ATP = L-seryl-tRNA(Sec) + AMP + diphosphate + H(+). The protein operates within aminoacyl-tRNA biosynthesis; selenocysteinyl-tRNA(Sec) biosynthesis; L-seryl-tRNA(Sec) from L-serine and tRNA(Sec): step 1/1. In terms of biological role, catalyzes the attachment of serine to tRNA(Ser). Is also able to aminoacylate tRNA(Sec) with serine, to form the misacylated tRNA L-seryl-tRNA(Sec), which will be further converted into selenocysteinyl-tRNA(Sec). In Lactobacillus acidophilus (strain ATCC 700396 / NCK56 / N2 / NCFM), this protein is Serine--tRNA ligase.